The sequence spans 282 residues: Pantothenate synthetase (282 aa).

32-39 is an ATP binding site; sequence MGALHEGH. The Proton donor role is filled by H39. Q63 provides a ligand contact to (R)-pantoate. Q63 provides a ligand contact to beta-alanine. 149–152 provides a ligand contact to ATP; that stretch reads GEKD. Q155 lines the (R)-pantoate pocket. ATP is bound by residues V178 and 186-189; that span reads LSSR.

It belongs to the pantothenate synthetase family. As to quaternary structure, homodimer.

The protein resides in the cytoplasm. It carries out the reaction (R)-pantoate + beta-alanine + ATP = (R)-pantothenate + AMP + diphosphate + H(+). It participates in cofactor biosynthesis; (R)-pantothenate biosynthesis; (R)-pantothenate from (R)-pantoate and beta-alanine: step 1/1. Catalyzes the condensation of pantoate with beta-alanine in an ATP-dependent reaction via a pantoyl-adenylate intermediate. This chain is Pantothenate synthetase, found in Paracoccus denitrificans (strain Pd 1222).